We begin with the raw amino-acid sequence, 37 residues long: Large ribosomal subunit protein bL36B (37 aa).

Belongs to the bacterial ribosomal protein bL36 family.

The protein is Large ribosomal subunit protein bL36B of Kineococcus radiotolerans (strain ATCC BAA-149 / DSM 14245 / SRS30216).